Consider the following 113-residue polypeptide: MATPGLGVLLAFGLPMLPSGWSLTAPDPFTNSTTQPPGDESNGGLSSGAIVAITVVFSILGVLLIAVGLFLLMRKLREKRQTEGTYRPSSEEQVGARAPPPPNLKLPPEERLI.

Positions 1-24 (MATPGLGVLLAFGLPMLPSGWSLT) are cleaved as a signal peptide. Positions 23–44 (LTAPDPFTNSTTQPPGDESNGG) are disordered. Over 25-49 (APDPFTNSTTQPPGDESNGGLSSGA) the chain is Extracellular. Asparagine 31 carries N-linked (GlcNAc...) asparagine glycosylation. A helical transmembrane segment spans residues 50-70 (IVAITVVFSILGVLLIAVGLF). Topologically, residues 71 to 113 (LLMRKLREKRQTEGTYRPSSEEQVGARAPPPPNLKLPPEERLI) are cytoplasmic. The interaction with EPB41L5 stretch occupies residues 77–113 (REKRQTEGTYRPSSEEQVGARAPPPPNLKLPPEERLI). Residues 80–113 (RQTEGTYRPSSEEQVGARAPPPPNLKLPPEERLI) form a disordered region. Polar residues predominate over residues 83 to 92 (EGTYRPSSEE). The PDZ-binding motif lies at 110-113 (ERLI).

Component of a complex composed of CRB3, PALS1 and PATJ. Interacts (via C-terminus) with PALS1 (via PDZ domain). Interacts with PARD6A. Interacts (via intracellular domain) with EPB41L5. Interacts with WDR83. In terms of tissue distribution, expressed in the apical renal tubules (at protein level). Expressed in the retinal pigment epithelium.

The protein resides in the apical cell membrane. It localises to the cell junction. Its subcellular location is the tight junction. In terms of biological role, involved in the establishment of cell polarity in mammalian epithelial cells. Regulates the morphogenesis of tight junctions. Involved in promoting phosphorylation and cytoplasmic retention of transcriptional coactivators YAP1 and WWTR1/TAZ which leads to suppression of TGFB1-dependent transcription of target genes such as CCN2/CTGF, SERPINE1/PAI1, SNAI1/SNAIL1 and SMAD7. The polypeptide is Protein crumbs homolog 3 (Crb3) (Mus musculus (Mouse)).